We begin with the raw amino-acid sequence, 305 residues long: Serine/threonine-protein phosphatase PP-X isozyme 1 (305 aa).

Positions 51, 53, 79, and 111 each coordinate Mn(2+). The active-site Proton donor is the His112. The Mn(2+) site is built by His161 and His236.

Belongs to the PPP phosphatase family. PP-4 (PP-X) subfamily. As to quaternary structure, interacts with TAP46. Mn(2+) is required as a cofactor. As to expression, ubiquitous, mostly expressed in root mersitems, flowers, and vascular tissues.

Its subcellular location is the plastid stroma. It catalyses the reaction O-phospho-L-seryl-[protein] + H2O = L-seryl-[protein] + phosphate. It carries out the reaction O-phospho-L-threonyl-[protein] + H2O = L-threonyl-[protein] + phosphate. The sequence is that of Serine/threonine-protein phosphatase PP-X isozyme 1 (PPX1) from Arabidopsis thaliana (Mouse-ear cress).